The following is a 229-amino-acid chain: Uracil-DNA glycosylase (229 aa).

Catalysis depends on D64, which acts as the Proton acceptor.

The protein belongs to the uracil-DNA glycosylase (UDG) superfamily. UNG family.

It localises to the cytoplasm. It catalyses the reaction Hydrolyzes single-stranded DNA or mismatched double-stranded DNA and polynucleotides, releasing free uracil.. Its function is as follows. Excises uracil residues from the DNA which can arise as a result of misincorporation of dUMP residues by DNA polymerase or due to deamination of cytosine. The protein is Uracil-DNA glycosylase of Geobacillus thermodenitrificans (strain NG80-2).